The chain runs to 583 residues: Interactor of constitutive active ROPs 2, chloroplastic (583 aa).

Residues 1-55 (MQTPKPRPGSLEVPQKKSPASTPKTARKLKTSESDPVSSPNTKIRTPKTQSPKVV) constitute a chloroplast transit peptide. 2 disordered regions span residues 1 to 80 (MQTP…PELA) and 101 to 125 (EALK…NASE). Positions 34 to 52 (SDPVSSPNTKIRTPKTQSP) are enriched in polar residues. 2 coiled-coil regions span residues 74-207 (GKTP…DAKE) and 238-516 (MKMS…AAAT). Residues 102–115 (ALKKEAQDQAEETK) show a composition bias toward basic and acidic residues. The disordered stretch occupies residues 518–583 (LSGGNNNNNS…IGVLLKKSQK (66 aa)). The segment covering 519 to 529 (SGGNNNNNSNG) has biased composition (low complexity). S540 is modified (phosphoserine).

This sequence belongs to the ICR family. In terms of assembly, interacts with ARAC8, ARAC11 and KIN13A in vitro, but not with ICR1 or SEC3A.

The protein localises to the plastid. Its subcellular location is the chloroplast. In terms of biological role, acts as a scaffold, mediating interaction of ROPs with different proteins. In Arabidopsis thaliana (Mouse-ear cress), this protein is Interactor of constitutive active ROPs 2, chloroplastic (ICR2).